Here is a 397-residue protein sequence, read N- to C-terminus: MDSIIPAGVKLDDLQVILAKNENETRDKVCKQINEARDEILPLRLQFNEFIQIMANIDQEGSKQADRMAKYLHIRDKILQLNDRFQTLSSHLEALQPLFSTVPEYLKTADNRDRSFQLLEPLSTYNKNGNAVCSTATVVSTNHSAAASTPTTTATPHANPITHAHSLSNPNSTATMQHNPLAGKRGPKSGSTMGTPTVHNSTAAAPIAAPKKPRKPRQTKKAKAQAQAQAQAQAQVYAQQSTVQTPITASMAAALPNPTPSMINSVSPTNVMGTPLTNMMSPMGNAYSMGAQNQGGQVSMSQFNGSGNGSNPNTNTNSNNTPLQSQLNLNNLTPANILNMSMNNDFQQQQQQQQQQQQPQPQYNMNMGMNNMNNGGKELDSLDLNNLELGGLNMDFL.

At M1 the chain carries N-acetylmethionine. Residues 147-165 (ASTPTTTATPHANPITHAH) show a composition bias toward low complexity. 3 disordered regions span residues 147-227 (ASTP…AQAQ), 288-327 (SMGAQNQGGQVSMSQFNGSGNGSNPNTNTNSNNTPLQSQL), and 346-370 (FQQQQQQQQQQQQPQPQYNMNMGMN). 2 stretches are compositionally biased toward polar residues: residues 166–178 (SLSNPNSTATMQH) and 189–202 (SGSTMGTPTVHNST). Positions 211–223 (KKPRKPRQTKKAK) are enriched in basic residues. The segment covering 290 to 303 (GAQNQGGQVSMSQF) has biased composition (polar residues). Over residues 309–322 (GSNPNTNTNSNNTP) the composition is skewed to low complexity.

This sequence belongs to the mediator complex subunit 3 family. Component of the Mediator complex, which is composed of at least 21 subunits that form three structurally distinct submodules. The Mediator head module contains MED6, MED8, MED11, SRB4/MED17, SRB5/MED18, ROX3/MED19, SRB2/MED20 and SRB6/MED22, the middle module contains MED1, MED4, NUT1/MED5, MED7, CSE2/MED9, NUT2/MED10, SRB7/MED21 and SOH1/MED31, and the tail module contains MED2, PGD1/MED3, RGR1/MED14, GAL11/MED15 and SIN4/MED16. The head and the middle modules interact directly with RNA polymerase II, whereas the elongated tail module interacts with gene-specific regulatory proteins. PGD1/MED3 interacts directly with the CYC8-TUP1 corepressor proteins.

It is found in the nucleus. Its function is as follows. Component of the Mediator complex, a coactivator involved in the regulated transcription of nearly all RNA polymerase II-dependent genes. Mediator functions as a bridge to convey information from gene-specific regulatory proteins to the basal RNA polymerase II transcription machinery. The Mediator complex, having a compact conformation in its free form, is recruited to promoters by direct interactions with regulatory proteins and serves for the assembly of a functional preinitiation complex with RNA polymerase II and the general transcription factors. The Mediator complex unfolds to an extended conformation and partially surrounds RNA polymerase II, specifically interacting with the unphosphorylated form of the C-terminal domain (CTD) of RNA polymerase II. The Mediator complex dissociates from the RNA polymerase II holoenzyme and stays at the promoter when transcriptional elongation begins. PGD1/MED3 is also involved in direct repeat recombination. This chain is Mediator of RNA polymerase II transcription subunit 3 (PGD1), found in Saccharomyces cerevisiae (strain ATCC 204508 / S288c) (Baker's yeast).